Here is a 542-residue protein sequence, read N- to C-terminus: Retron Ec83 probable ATPase (542 aa).

The ATP-binding motif lies at G92 to S99.

Its function is as follows. Probable ATPase component of antiviral defense system retron Ec83, composed of a non-coding RNA (ncRNA), a reverse transcriptase (RT), this protein and a putative HNH endonuclease. Expression of retron Ec83 confers protection against bacteriophage T2, T4 and T6. At multiplicity of infection (MOI) of 0.02 cultures slow growth when infected with T4 but do not collapse, at MOI 2 cultures enter growth stasis. In Escherichia coli, this protein is Retron Ec83 probable ATPase.